The following is a 255-amino-acid chain: Phosphoribosyl isomerase A (255 aa).

Aspartate 21 acts as the Proton acceptor in catalysis. Aspartate 140 functions as the Proton donor in the catalytic mechanism.

It belongs to the HisA/HisF family.

It localises to the cytoplasm. It carries out the reaction 1-(5-phospho-beta-D-ribosyl)-5-[(5-phospho-beta-D-ribosylamino)methylideneamino]imidazole-4-carboxamide = 5-[(5-phospho-1-deoxy-D-ribulos-1-ylimino)methylamino]-1-(5-phospho-beta-D-ribosyl)imidazole-4-carboxamide. The enzyme catalyses N-(5-phospho-beta-D-ribosyl)anthranilate = 1-(2-carboxyphenylamino)-1-deoxy-D-ribulose 5-phosphate. It functions in the pathway amino-acid biosynthesis; L-histidine biosynthesis; L-histidine from 5-phospho-alpha-D-ribose 1-diphosphate: step 4/9. It participates in amino-acid biosynthesis; L-tryptophan biosynthesis; L-tryptophan from chorismate: step 3/5. Its function is as follows. Involved in both the histidine and tryptophan biosynthetic pathways. This Mycolicibacterium vanbaalenii (strain DSM 7251 / JCM 13017 / BCRC 16820 / KCTC 9966 / NRRL B-24157 / PYR-1) (Mycobacterium vanbaalenii) protein is Phosphoribosyl isomerase A.